The primary structure comprises 406 residues: Cysteine desulfurase (406 aa).

The residue at position 226 (lysine 226) is an N6-(pyridoxal phosphate)lysine. Cysteine 364 (cysteine persulfide intermediate) is an active-site residue.

This sequence belongs to the class-V pyridoxal-phosphate-dependent aminotransferase family. Csd subfamily. Homodimer. Interacts with SufE and the SufBCD complex composed of SufB, SufC and SufD. The interaction with SufE is required to mediate the direct transfer of the sulfur atom from the S-sulfanylcysteine. Requires pyridoxal 5'-phosphate as cofactor.

Its subcellular location is the cytoplasm. It catalyses the reaction (sulfur carrier)-H + L-cysteine = (sulfur carrier)-SH + L-alanine. The catalysed reaction is L-selenocysteine + AH2 = hydrogenselenide + L-alanine + A + H(+). It participates in cofactor biosynthesis; iron-sulfur cluster biosynthesis. Cysteine desulfurases mobilize the sulfur from L-cysteine to yield L-alanine, an essential step in sulfur metabolism for biosynthesis of a variety of sulfur-containing biomolecules. Component of the suf operon, which is activated and required under specific conditions such as oxidative stress and iron limitation. Acts as a potent selenocysteine lyase in vitro, that mobilizes selenium from L-selenocysteine. Selenocysteine lyase activity is however unsure in vivo. The sequence is that of Cysteine desulfurase from Escherichia coli O17:K52:H18 (strain UMN026 / ExPEC).